The following is a 153-amino-acid chain: Partner of bursicon (153 aa).

The first 35 residues, 1 to 35 (MCNSVRTALAASNCCSIVLCCVLLLTLTLTVAVTA), serve as a signal peptide directing secretion. Disulfide bonds link cysteine 44-cysteine 102, cysteine 68-cysteine 117, cysteine 77-cysteine 143, cysteine 81-cysteine 145, and cysteine 99-cysteine 148. Positions 44–139 (CETLPSEIHL…SATMEIRLKE (96 aa)) constitute a CTCK domain.

Heterodimer of burs and pburs.

The protein resides in the secreted. Final heterodimeric neurohormone released at the end of the molting cycle, involved in the sclerotization (tanning) of the insect cuticle, melanization and wing spreading. The sequence is that of Partner of bursicon from Anopheles gambiae (African malaria mosquito).